Reading from the N-terminus, the 267-residue chain is 2-keto-3-deoxy-L-rhamnonate aldolase (267 aa).

His-49 acts as the Proton acceptor in catalysis. Gln-151 is a binding site for substrate. Glu-153 lines the Mg(2+) pocket. Substrate contacts are provided by Ala-178 and Asp-179. Position 179 (Asp-179) interacts with Mg(2+).

Belongs to the HpcH/HpaI aldolase family. KDR aldolase subfamily. As to quaternary structure, homohexamer. Mg(2+) serves as cofactor.

The enzyme catalyses 2-dehydro-3-deoxy-L-rhamnonate = (S)-lactaldehyde + pyruvate. Catalyzes the reversible retro-aldol cleavage of 2-keto-3-deoxy-L-rhamnonate (KDR) to pyruvate and lactaldehyde. This Shigella boydii serotype 4 (strain Sb227) protein is 2-keto-3-deoxy-L-rhamnonate aldolase.